The primary structure comprises 123 residues: Angiogenin-2 (123 aa).

Q1 carries the pyrrolidone carboxylic acid modification. H12 serves as the catalytic Proton acceptor. Cystine bridges form between C25-C80, C38-C91, and C56-C106. A Nucleolar localization signal motif is present at residues 30–34 (ERRNM). N-linked (GlcNAc...) asparagine glycosylation is present at N33. The Zn(2+) site is built by D40, H82, and H113. H113 functions as the Proton donor in the catalytic mechanism.

Belongs to the pancreatic ribonuclease family. As to expression, serum and milk.

The protein localises to the cytoplasmic vesicle. It is found in the secretory vesicle lumen. It localises to the secreted. The protein resides in the nucleus. Its subcellular location is the nucleolus. Its activity is regulated as follows. Divalent metal ions, such as Cu2+ and Zn2+, may inhibit the ribonucleolytic activity. In terms of biological role, binds tightly to placental ribonuclease inhibitor and has very low ribonuclease activity. Has potent angiogenic activity. Angiogenin induces vascularization of normal and malignant tissues. Abolishes protein synthesis by specifically hydrolyzing cellular tRNAs. This is Angiogenin-2 from Bos taurus (Bovine).